Reading from the N-terminus, the 846-residue chain is Enhancer of polycomb-like protein 1 (846 aa).

Disordered regions lie at residues 169–204 (FNSKAEGSSGDVKSDKEQGRGMRVKGKDREKEKGDA), 391–466 (TSDE…APDA), 587–607 (EKKRPRSIDEVEEEMQEQSPK), 682–702 (AADAKPPPAPIFQKPPAPQPN), and 759–804 (QVQA…GVKQ). Over residues 180 to 203 (VKSDKEQGRGMRVKGKDREKEKGD) the composition is skewed to basic and acidic residues. Positions 411 to 426 (PSLSGQTPLTSGQSSS) are enriched in polar residues. Over residues 432-452 (TDKDREERAQRERYDAQRNAE) the composition is skewed to basic and acidic residues. Residues 434–490 (KDREERAQRERYDAQRNAERSGILSGRSNAPDALKERLQALQQKTEEMLARKKEQDA) adopt a coiled-coil conformation. The span at 686-702 (KPPPAPIFQKPPAPQPN) shows a compositional bias: pro residues. A compositionally biased stretch (low complexity) spans 759 to 773 (QVQAQGQGHPQAHLQ). Residues 783-796 (NGVNSPMPNGQQML) are compositionally biased toward polar residues.

Belongs to the enhancer of polycomb family. In terms of assembly, component of the NuA4 histone acetyltransferase complex.

The protein resides in the nucleus. In terms of biological role, component of the NuA4 histone acetyltransferase complex which is involved in transcriptional activation of selected genes principally by acetylation of nucleosomal histone H4 and H2A. The NuA4 complex is also involved in DNA repair. Involved in gene silencing by neighboring heterochromatin, blockage of the silencing spreading along the chromosome, and required for cell cycle progression through G2/M. This Cryptococcus neoformans var. neoformans serotype D (strain JEC21 / ATCC MYA-565) (Filobasidiella neoformans) protein is Enhancer of polycomb-like protein 1 (EPL1).